The sequence spans 348 residues: Pyruvate dehydrogenase E1 component subunit alpha (348 aa).

A disordered region spans residues 1 to 21 (MAPRKSASVSSRKTAAKPAKK).

Heterodimer of an alpha and a beta chain. Requires thiamine diphosphate as cofactor.

The enzyme catalyses N(6)-[(R)-lipoyl]-L-lysyl-[protein] + pyruvate + H(+) = N(6)-[(R)-S(8)-acetyldihydrolipoyl]-L-lysyl-[protein] + CO2. Functionally, the pyruvate dehydrogenase complex catalyzes the overall conversion of pyruvate to acetyl-CoA and CO(2). It contains multiple copies of three enzymatic components: pyruvate dehydrogenase (E1), dihydrolipoamide acetyltransferase (E2) and lipoamide dehydrogenase (E3). In Rhizobium meliloti (strain 1021) (Ensifer meliloti), this protein is Pyruvate dehydrogenase E1 component subunit alpha (pdhA).